We begin with the raw amino-acid sequence, 440 residues long: N-succinylarginine dihydrolase (440 aa).

Substrate contacts are provided by residues 17–26 (GGLSPGNLAS), N108, and 135–136 (HR). The tract at residues 17-37 (GGLSPGNLASQSHVGEPSHPR) is disordered. E172 is a catalytic residue. R210 lines the substrate pocket. The active site involves H246. Substrate-binding residues include D248 and N358. Catalysis depends on C364, which acts as the Nucleophile.

The protein belongs to the succinylarginine dihydrolase family. Homodimer.

The enzyme catalyses N(2)-succinyl-L-arginine + 2 H2O + 2 H(+) = N(2)-succinyl-L-ornithine + 2 NH4(+) + CO2. It functions in the pathway amino-acid degradation; L-arginine degradation via AST pathway; L-glutamate and succinate from L-arginine: step 2/5. Catalyzes the hydrolysis of N(2)-succinylarginine into N(2)-succinylornithine, ammonia and CO(2). The polypeptide is N-succinylarginine dihydrolase (Myxococcus xanthus (strain DK1622)).